We begin with the raw amino-acid sequence, 346 residues long: Cyclin-dependent kinase 20 (346 aa).

One can recognise a Protein kinase domain in the interval 4 to 288 (YCILGRIGEG…ASQALLHQYF (285 aa)). Residues 10-18 (IGEGAHGIV) and Lys-33 contribute to the ATP site. The active-site Proton acceptor is the Asp-127. Residues 298–324 (SELPIPQRPGGPAPKAHPGPPHVHDFH) are disordered. Residues 303-318 (PQRPGGPAPKAHPGPP) are compositionally biased toward pro residues.

It belongs to the protein kinase superfamily. CMGC Ser/Thr protein kinase family. CDC2/CDKX subfamily. Monomer. Interacts with MAK. Interacts with TBC1D32.

It localises to the nucleus. The protein resides in the cytoplasm. Its subcellular location is the cell projection. The protein localises to the cilium. It catalyses the reaction L-seryl-[protein] + ATP = O-phospho-L-seryl-[protein] + ADP + H(+). The catalysed reaction is L-threonyl-[protein] + ATP = O-phospho-L-threonyl-[protein] + ADP + H(+). Functionally, involved in cell growth. Activates CDK2, a kinase involved in the control of the cell cycle, by phosphorylating residue 'Thr-160'. Required for high-level Shh responses in the developing neural tube. Together with TBC1D32, controls the structure of the primary cilium by coordinating assembly of the ciliary membrane and axoneme, allowing GLI2 to be properly activated in response to SHH signaling. The chain is Cyclin-dependent kinase 20 (Cdk20) from Mus musculus (Mouse).